The following is a 359-amino-acid chain: Type-1 angiotensin II receptor (359 aa).

The Extracellular portion of the chain corresponds to 1 to 25; it reads MILNSSTEDSIKRIQDDCPKAGRHN. A glycan (N-linked (GlcNAc...) asparagine) is linked at N4. Residues Q15 and D17 each coordinate angiotensin II. 2 cysteine pairs are disulfide-bonded: C18/C274 and C101/C180. The chain crosses the membrane as a helical span at residues 26-55; it reads YIFVMIPTLYSIIFVVGIFGNSLVVIVIYF. Residues 56–61 are Cytoplasmic-facing; it reads YMKLKT. The chain crosses the membrane as a helical span at residues 62 to 89; the sequence is VASVFLLNLALADLCFLLTLPLWAVYTA. Topologically, residues 90–98 are extracellular; sequence MEYRWPFGN. The helical transmembrane segment at 99 to 125 threads the bilayer; sequence YLCKIASASVSFNLYASVFLLTCLSID. Topologically, residues 126–141 are cytoplasmic; the sequence is RYLAIVHPMKSRLRRT. Residues 142-165 traverse the membrane as a helical segment; the sequence is MLVAKVTCIIIWLLAGLASLPTII. At 166–190 the chain is on the extracellular side; that stretch reads HRNVFFIENTNITVCAFHYESQNST. R167 contributes to the angiotensin II binding site. The N-linked (GlcNAc...) asparagine glycan is linked to N176. 3 residues coordinate angiotensin II: F182, H183, and Y184. N188 is a glycosylation site (N-linked (GlcNAc...) asparagine). The chain crosses the membrane as a helical span at residues 191–216; that stretch reads LPVGLGLTKNILGFLFPFLIILTSYT. K199 is a binding site for angiotensin II. Over 217–239 the chain is Cytoplasmic; that stretch reads LIWKALKKAYEIQKNKPRNDDIF. Residues 240-268 form a helical membrane-spanning segment; sequence KIIMAIVLFFFFSWVPHQIFTFLDVLIQL. The Extracellular portion of the chain corresponds to 269 to 278; the sequence is GIIHDCKIAD. The helical transmembrane segment at 279-304 threads the bilayer; that stretch reads IVDTAMPITICLAYFNNCLNPLFYGF. The Cytoplasmic portion of the chain corresponds to 305-359; the sequence is LGKKFKKYFLQLLKYIPPKAKSHSSLSTKMSTLSYRPSENGSSSTKKSAPCTEVE. Residues 326 to 359 form a disordered region; it reads SHSSLSTKMSTLSYRPSENGSSSTKKSAPCTEVE. Positions 327 to 351 are enriched in polar residues; it reads HSSLSTKMSTLSYRPSENGSSSTKK. C355 carries the S-palmitoyl cysteine lipid modification.

Belongs to the G-protein coupled receptor 1 family. As to quaternary structure, interacts with MAS1. Interacts with ARRB1. Interacts with FLNA (via filamin repeat 21); increases PKA-mediated phosphorylation of FLNA. C-terminal Ser or Thr residues may be phosphorylated.

It is found in the cell membrane. Functionally, receptor for angiotensin II, a vasoconstricting peptide, which acts as a key regulator of blood pressure and sodium retention by the kidney. The activated receptor in turn couples to G-alpha proteins G(q) (GNAQ, GNA11, GNA14 or GNA15) and thus activates phospholipase C and increases the cytosolic Ca(2+) concentrations, which in turn triggers cellular responses such as stimulation of protein kinase C. The polypeptide is Type-1 angiotensin II receptor (AGTR1) (Sus scrofa (Pig)).